The chain runs to 157 residues: uncharacterized protein (157 aa).

This sequence belongs to the mimivirus L242/L243 family.

This is an uncharacterized protein from Acanthamoeba polyphaga (Amoeba).